Consider the following 111-residue polypeptide: Ig kappa chain V-III region PC 2880/PC 1229 (111 aa).

The framework-1 stretch occupies residues 1 to 23 (DIVLTQSPASLAVSLGQRATISC). Cys-23 and Cys-92 are oxidised to a cystine. The segment at 24-38 (RASESVDNYGISFMN) is complementarity-determining-1. The tract at residues 39 to 53 (WFQQKPGQPPKLLIY) is framework-2. Residues 54-60 (AASNQGS) form a complementarity-determining-2 region. Residues 61-92 (GVPARFSGSGSGTDFSLNIHPMEEDDTAMYFC) form a framework-3 region. The tract at residues 93-101 (QQSKEVPWT) is complementarity-determining-3. The segment at 102 to 111 (FGGGTKLEIK) is framework-4.

The protein is Ig kappa chain V-III region PC 2880/PC 1229 of Mus musculus (Mouse).